The primary structure comprises 186 residues: Ribosome-recycling factor (186 aa).

This sequence belongs to the RRF family.

Its subcellular location is the cytoplasm. Responsible for the release of ribosomes from messenger RNA at the termination of protein biosynthesis. May increase the efficiency of translation by recycling ribosomes from one round of translation to another. The protein is Ribosome-recycling factor of Polynucleobacter asymbioticus (strain DSM 18221 / CIP 109841 / QLW-P1DMWA-1) (Polynucleobacter necessarius subsp. asymbioticus).